Reading from the N-terminus, the 417-residue chain is RH-like protein (417 aa).

11 consecutive transmembrane segments (helical) span residues 12-32 (CLPL…FFFT), 44-64 (LVAS…GLGF), 77-97 (VAFN…LDGF), 125-145 (ISMN…MELV), 172-192 (IHVF…KPLP), 203-223 (TSPS…WPTF), 238-258 (VFST…VSSL), 265-285 (INMT…SASC), 287-307 (VIHS…ISIG), 331-351 (TFGL…ALRV), and 358-378 (MIGF…AMSI).

This sequence belongs to the ammonium transporter (TC 2.A.49) family. Rh subfamily.

It localises to the membrane. May be part of an oligomeric complex which is likely to have a transport or channel function in the erythrocyte membrane. In Macaca mulatta (Rhesus macaque), this protein is RH-like protein.